The chain runs to 303 residues: UDP-3-O-acyl-N-acetylglucosamine deacetylase (303 aa).

Residues His78, His237, and Asp241 each coordinate Zn(2+). Catalysis depends on His264, which acts as the Proton donor.

Belongs to the LpxC family. It depends on Zn(2+) as a cofactor.

It catalyses the reaction a UDP-3-O-[(3R)-3-hydroxyacyl]-N-acetyl-alpha-D-glucosamine + H2O = a UDP-3-O-[(3R)-3-hydroxyacyl]-alpha-D-glucosamine + acetate. The protein operates within glycolipid biosynthesis; lipid IV(A) biosynthesis; lipid IV(A) from (3R)-3-hydroxytetradecanoyl-[acyl-carrier-protein] and UDP-N-acetyl-alpha-D-glucosamine: step 2/6. In terms of biological role, catalyzes the hydrolysis of UDP-3-O-myristoyl-N-acetylglucosamine to form UDP-3-O-myristoylglucosamine and acetate, the committed step in lipid A biosynthesis. The chain is UDP-3-O-acyl-N-acetylglucosamine deacetylase from Teredinibacter turnerae (strain ATCC 39867 / T7901).